We begin with the raw amino-acid sequence, 415 residues long: uncharacterized protein (415 aa).

Cys-276 and Cys-316 together coordinate [4Fe-4S] cluster.

In terms of assembly, homodimer. Requires [4Fe-4S] cluster as cofactor.

This is an uncharacterized protein from Methanocaldococcus jannaschii (strain ATCC 43067 / DSM 2661 / JAL-1 / JCM 10045 / NBRC 100440) (Methanococcus jannaschii).